We begin with the raw amino-acid sequence, 153 residues long: FAD synthase (153 aa).

ATP contacts are provided by residues 9–10 (TF), 14–17 (HPGH), Asp-97, and Tyr-124.

This sequence belongs to the archaeal FAD synthase family. In terms of assembly, homodimer. The cofactor is a divalent metal cation.

It catalyses the reaction FMN + ATP + H(+) = FAD + diphosphate. Its pathway is cofactor biosynthesis; FAD biosynthesis; FAD from FMN: step 1/1. In terms of biological role, catalyzes the transfer of the AMP portion of ATP to flavin mononucleotide (FMN) to produce flavin adenine dinucleotide (FAD) coenzyme. This Methanobrevibacter smithii (strain ATCC 35061 / DSM 861 / OCM 144 / PS) protein is FAD synthase.